The primary structure comprises 353 residues: Fe(3+) ions import ATP-binding protein FbpC (353 aa).

Positions V9–M239 constitute an ABC transporter domain. G41–T48 is an ATP binding site.

Belongs to the ABC transporter superfamily. Fe(3+) ion importer (TC 3.A.1.10) family. The complex is composed of two ATP-binding proteins (FbpC), two transmembrane proteins (FbpB) and a solute-binding protein (FbpA).

Its subcellular location is the cell inner membrane. The catalysed reaction is Fe(3+)(out) + ATP + H2O = Fe(3+)(in) + ADP + phosphate + H(+). Part of the ABC transporter complex FbpABC involved in Fe(3+) ions import. Responsible for energy coupling to the transport system. The polypeptide is Fe(3+) ions import ATP-binding protein FbpC (Rhizobium etli (strain ATCC 51251 / DSM 11541 / JCM 21823 / NBRC 15573 / CFN 42)).